The primary structure comprises 342 residues: S-adenosylmethionine:tRNA ribosyltransferase-isomerase (342 aa).

This sequence belongs to the QueA family. Monomer.

The protein resides in the cytoplasm. The enzyme catalyses 7-aminomethyl-7-carbaguanosine(34) in tRNA + S-adenosyl-L-methionine = epoxyqueuosine(34) in tRNA + adenine + L-methionine + 2 H(+). It participates in tRNA modification; tRNA-queuosine biosynthesis. Transfers and isomerizes the ribose moiety from AdoMet to the 7-aminomethyl group of 7-deazaguanine (preQ1-tRNA) to give epoxyqueuosine (oQ-tRNA). In Streptococcus sanguinis (strain SK36), this protein is S-adenosylmethionine:tRNA ribosyltransferase-isomerase.